Consider the following 113-residue polypeptide: UPF0145 protein TK1926 (113 aa).

Belongs to the UPF0145 family.

The chain is UPF0145 protein TK1926 from Thermococcus kodakarensis (strain ATCC BAA-918 / JCM 12380 / KOD1) (Pyrococcus kodakaraensis (strain KOD1)).